Consider the following 226-residue polypeptide: Transcriptional regulatory protein DpiA (226 aa).

The 117-residue stretch at 6–122 (TLLIVEDETP…RLGQTLTRFR (117 aa)) folds into the Response regulatory domain. The residue at position 57 (Asp-57) is a 4-aspartylphosphate. Residues 180-199 (AETVAQALTISRTTARRYLE) constitute a DNA-binding region (H-T-H motif).

Phosphorylated and activated by DpiB.

It is found in the cytoplasm. Functionally, member of the two-component regulatory system DpiA/DpiB, which is essential for expression of citrate-specific fermentation genes and genes involved in plasmid inheritance. Could be involved in response to both the presence of citrate and external redox conditions. This is Transcriptional regulatory protein DpiA (dpiA) from Escherichia coli O157:H7.